Here is a 271-residue protein sequence, read N- to C-terminus: 3-methyl-2-oxobutanoate hydroxymethyltransferase (271 aa).

Mg(2+) is bound by residues Asp-51 and Asp-90. 3-methyl-2-oxobutanoate-binding positions include 51–52, Asp-90, and Lys-118; that span reads DS. Glu-120 serves as a coordination point for Mg(2+). The Proton acceptor role is filled by Glu-186.

This sequence belongs to the PanB family. Homodecamer; pentamer of dimers. Mg(2+) serves as cofactor.

The protein resides in the cytoplasm. The enzyme catalyses 3-methyl-2-oxobutanoate + (6R)-5,10-methylene-5,6,7,8-tetrahydrofolate + H2O = 2-dehydropantoate + (6S)-5,6,7,8-tetrahydrofolate. It participates in cofactor biosynthesis; (R)-pantothenate biosynthesis; (R)-pantoate from 3-methyl-2-oxobutanoate: step 1/2. Its function is as follows. Catalyzes the reversible reaction in which hydroxymethyl group from 5,10-methylenetetrahydrofolate is transferred onto alpha-ketoisovalerate to form ketopantoate. In Xanthomonas campestris pv. campestris (strain 8004), this protein is 3-methyl-2-oxobutanoate hydroxymethyltransferase.